A 923-amino-acid polypeptide reads, in one-letter code: Carnitine O-acetyltransferase YAT2 (923 aa).

Residues 1–11 show a composition bias toward polar residues; the sequence is MSSGSTIVSSD. 2 disordered regions span residues 1–21 and 197–232; these read MSSG…KHEE and NKPY…KRKH. Ser-2 is modified (N-acetylserine). A compositionally biased stretch (basic and acidic residues) spans 12–21; the sequence is KSGRTFKHEE. Over residues 204 to 219 the composition is skewed to acidic residues; the sequence is DLEDPDYSSDEDDNDE. Basic and acidic residues predominate over residues 220–232; the sequence is PTQKDFDDRKRKH. CoA is bound by residues 529-541 and Ser-567; that span reads GRRS…VKPD. Position 576 (Ser-576) interacts with (R)-carnitine. The interval 763–787 is disordered; that stretch reads NAVNNPPKRNGHTVNGSRKTSSSSQ. Residues 774–787 show a composition bias toward polar residues; that stretch reads HTVNGSRKTSSSSQ. Ser-783 carries the phosphoserine modification.

Belongs to the carnitine/choline acetyltransferase family.

It is found in the cytoplasm. It carries out the reaction (R)-carnitine + acetyl-CoA = O-acetyl-(R)-carnitine + CoA. Functionally, carnitine O-acetyltransferase involved in the shutteling of acetyl-CoA in the cell. The protein is Carnitine O-acetyltransferase YAT2 of Saccharomyces cerevisiae (strain ATCC 204508 / S288c) (Baker's yeast).